We begin with the raw amino-acid sequence, 102 residues long: Small ribosomal subunit protein uS10 (102 aa).

The protein belongs to the universal ribosomal protein uS10 family. Part of the 30S ribosomal subunit.

In terms of biological role, involved in the binding of tRNA to the ribosomes. The protein is Small ribosomal subunit protein uS10 of Streptococcus sanguinis (strain SK36).